The following is a 150-amino-acid chain: UPF0756 membrane protein Asuc_1151 (150 aa).

4 helical membrane-spanning segments follow: residues 1-21, 52-72, 82-102, and 123-143; these read MSLH…LGVL, YGLN…IVAG, LLHW…WLAG, and ILGV…AGIL.

This sequence belongs to the UPF0756 family.

It is found in the cell membrane. This Actinobacillus succinogenes (strain ATCC 55618 / DSM 22257 / CCUG 43843 / 130Z) protein is UPF0756 membrane protein Asuc_1151.